Consider the following 1057-residue polypeptide: Probable sucrose-phosphate synthase 1 (1057 aa).

Positions 103–115 (RRLERERGRREAT) are enriched in basic and acidic residues. Disordered stretches follow at residues 103 to 143 (RRLE…STRS), 439 to 459 (PQDGDMDGETEGNEDNPASPD), and 670 to 693 (RHPQWQRTDDGGETSESDSPGDSL). Residues 442 to 452 (GDMDGETEGNE) show a composition bias toward acidic residues.

The protein belongs to the glycosyltransferase 1 family. As to quaternary structure, homodimer or homotetramer.

It catalyses the reaction beta-D-fructose 6-phosphate + UDP-alpha-D-glucose = sucrose 6(F)-phosphate + UDP + H(+). The protein operates within glycan biosynthesis; sucrose biosynthesis; sucrose from D-fructose 6-phosphate and UDP-alpha-D-glucose: step 1/2. With respect to regulation, activity is regulated by phosphorylation and moderated by concentration of metabolites and light. In terms of biological role, plays a role in photosynthetic sucrose synthesis by catalyzing the rate-limiting step of sucrose biosynthesis from UDP-glucose and fructose- 6-phosphate. Involved in the regulation of carbon partitioning in the leaves of plants. May regulate the synthesis of sucrose and therefore play a major role as a limiting factor in the export of photoassimilates out of the leaf. Plays a role for sucrose availability that is essential for plant growth and fiber elongation. In Citrus unshiu (Satsuma mandarin), this protein is Probable sucrose-phosphate synthase 1 (SPS1).